A 682-amino-acid polypeptide reads, in one-letter code: Transcription activator of gluconeogenesis PODANS_4_8760 (682 aa).

A disordered region spans residues 1 to 72; it reads MPEDGGPFGS…KDPLRPRRKK (72 aa). Residues 9–21 are compositionally biased toward low complexity; the sequence is GSEAAEASGAMSE. Composition is skewed to basic and acidic residues over residues 29–41 and 54–67; these read HEPH…DRMS and GEVK…DPLR. The segment at residues 77-105 is a DNA-binding region (zn(2)-C6 fungal-type); it reads CYACQRAHLTCGDERPCQRCIKRGLQDSC. Disordered regions lie at residues 122–148, 181–211, 325–375, 509–541, and 586–622; these read EALR…RHHS, LTES…SGMV, PAGP…RPSK, NRNT…AASG, and TDKP…HSIL. Polar residues-rich tracts occupy residues 185–206, 329–345, and 354–373; these read LPFN…SNPP, TSLQ…QPTT, and PTMS…NSRP.

This sequence belongs to the ERT1/acuK family.

The protein resides in the nucleus. Transcription factor which regulates nonfermentable carbon utilization. Activator of gluconeogenetic genes. The protein is Transcription activator of gluconeogenesis PODANS_4_8760 of Podospora anserina (strain S / ATCC MYA-4624 / DSM 980 / FGSC 10383) (Pleurage anserina).